Here is a 3330-residue protein sequence, read N- to C-terminus: Laminin subunit alpha-3 (3330 aa).

Residues 1–31 (MAVALGRAPRSLPLLLTLLLLLLLRMSPSWS) form the signal peptide. Residues 40 to 295 (SSRSLHPPYF…SIKDISVGGR (256 aa)) enclose the Laminin N-terminal domain. N-linked (GlcNAc...) asparagine glycosylation occurs at Asn-139. The interval 295–725 (RCVCNGHAEA…NNYYFPDLHH (431 aa)) is domain V. 27 cysteine pairs are disulfide-bonded: Cys-296/Cys-305, Cys-298/Cys-316, Cys-318/Cys-327, Cys-330/Cys-350, Cys-353/Cys-362, Cys-355/Cys-387, Cys-390/Cys-399, Cys-402/Cys-420, Cys-423/Cys-433, Cys-425/Cys-440, Cys-442/Cys-451, Cys-454/Cys-464, Cys-488/Cys-500, Cys-490/Cys-506, Cys-508/Cys-517, Cys-520/Cys-530, Cys-533/Cys-545, Cys-535/Cys-552, Cys-554/Cys-563, Cys-566/Cys-583, Cys-628/Cys-642, Cys-630/Cys-649, Cys-651/Cys-660, Cys-663/Cys-678, Cys-681/Cys-693, Cys-683/Cys-700, and Cys-702/Cys-711. 8 Laminin EGF-like domains span residues 296–350 (CVCN…HNEC), 353–420 (CNCH…LHGC), 423–464 (CSCD…FPFC), 488–530 (CDCN…FPIC), 533–576 (CQCS…FPYC), 582–625 (VCHP…PRGC), 628–678 (CQCH…YFGC), and 681–725 (CQCD…DLHH). The N-linked (GlcNAc...) asparagine glycan is linked to Asn-445. The domain IV 1 (domain IV B) stretch occupies residues 793 to 1262 (TEAISGRITL…VAFYHNGAIP (470 aa)). The tract at residues 1263–1462 (CECDPAGTAG…CFCFGVNTDC (200 aa)) is domain III B. Disulfide bonds link Cys-1309-Cys-1316, Cys-1311-Cys-1323, Cys-1325-Cys-1334, Cys-1337-Cys-1350, Cys-1353-Cys-1368, Cys-1355-Cys-1375, Cys-1377-Cys-1386, Cys-1389-Cys-1399, Cys-1402-Cys-1414, Cys-1404-Cys-1421, Cys-1423-Cys-1432, and Cys-1435-Cys-1450. Laminin EGF-like domains follow at residues 1309–1352 (CNCG…GCDV), 1353–1401 (CNCS…ECVP), and 1402–1452 (CSCN…GCTK). Asn-1354 carries N-linked (GlcNAc...) asparagine glycosylation. The Laminin EGF-like 12; first part domain occupies 1453–1462 (CFCFGVNTDC). The Laminin IV type A domain occupies 1466–1650 (HKQRAKFVDM…SGPRAHLVEM (185 aa)). The region spanning 1651–1683 (CACPPDYTGDSCQGCRPGYYWDNKSLPVGRCVP) is the Laminin EGF-like 12; second part domain. A domain III A region spans residues 1651 to 1818 (CACPPDYTGD…DGSPAEECDD (168 aa)). Asn-1673 carries N-linked (GlcNAc...) asparagine glycosylation. 8 cysteine pairs are disulfide-bonded: Cys-1684–Cys-1693, Cys-1686–Cys-1700, Cys-1703–Cys-1712, Cys-1715–Cys-1728, Cys-1731–Cys-1743, Cys-1733–Cys-1752, Cys-1754–Cys-1763, and Cys-1766–Cys-1781. Laminin EGF-like domains lie at 1684 to 1730 (CNCN…SCRV) and 1731 to 1783 (CPCP…SCQP). A Laminin EGF-like 15; truncated domain is found at 1784 to 1818 (CNCNSNGQLGPCDPLTGDCVNQEPKDGSPAEECDD). Residues 1819-2385 (CDSCVMTLLN…ARDAANKVAI (567 aa)) form a domain II and I region. Coiled coils occupy residues 1851-1980 (TGAL…LRSR), 2012-2057 (VENN…HENE), 2088-2165 (LLQT…GDEL), and 2211-2238 (KRAK…QQVS). N-linked (GlcNAc...) asparagine glycosylation occurs at Asn-2159. N-linked (GlcNAc...) asparagine glycosylation occurs at Asn-2261. The short motif at 2274–2276 (RGD) is the Cell attachment site element. Residues 2318-2383 (SARREDFSKA…QQARDAANKV (66 aa)) are a coiled coil. 5 N-linked (GlcNAc...) asparagine glycosylation sites follow: Asn-2332, Asn-2361, Asn-2498, Asn-2580, and Asn-2747. 5 Laminin G-like domains span residues 2386–2587 (PMRF…VEPC), 2594–2756 (SDKN…TKKC), 2763–2923 (VRTA…LGGC), 2983–3147 (ALQF…VSPC), and 3154–3327 (KGIY…LNGC). 3 cysteine pairs are disulfide-bonded: Cys-2557–Cys-2587, Cys-2733–Cys-2756, and Cys-2891–Cys-2923. Asn-3094 is a glycosylation site (N-linked (GlcNAc...) asparagine). Cysteines 3124 and 3147 form a disulfide. Asn-3270 carries an N-linked (GlcNAc...) asparagine glycan. Cys-3299 and Cys-3327 are joined by a disulfide.

As to quaternary structure, laminin is a complex glycoprotein, consisting of three different polypeptide chains (alpha, beta, gamma), which are bound to each other by disulfide bonds into a cross-shaped molecule comprising one long and three short arms with globules at each end. Alpha-3 is a subunit of laminin-5 (laminin-332 or epiligrin/kalinin/nicein), laminin-6 (laminin-311 or K-laminin) and laminin-7 (laminin-321 or KS-laminin). As to expression, basal membrane of the upper alimentary tract and urinary and nasal epithelia, salivary glands and teeth (both variants). Isoform A is predominantly expressed in skin, hair follicles and developing neurons of the trigeminal ganglion. Isoform B was found in bronchi, alveoli, stomach, intestinal crypts, whisker pads, CNS, telencephalic neuroectoderm, thalamus, Rathke pouch and periventricular subependymal germinal layer.

The protein localises to the secreted. The protein resides in the extracellular space. It localises to the extracellular matrix. Its subcellular location is the basement membrane. Functionally, binding to cells via a high affinity receptor, laminin is thought to mediate the attachment, migration and organization of cells into tissues during embryonic development by interacting with other extracellular matrix components. Laminin-5 is thought to be involved in (1) cell adhesion via integrin alpha-3/beta-1 in focal adhesion and integrin alpha-6/beta-4 in hemidesmosomes, (2) signal transduction via tyrosine phosphorylation of pp125-FAK and p80, (3) differentiation of keratinocytes. This Mus musculus (Mouse) protein is Laminin subunit alpha-3 (Lama3).